Consider the following 223-residue polypeptide: MDLASLRAQQIELASSVCREDRLDKDPPAFIGGADVGFEQGGEVTWAAMVLLKYPSLELVEYKVARIATTMPYIPGFLSFREYPALLAAWEQLSQKPDLLFVDGHGISHPRRLGVASHFGLLVDVPTIGVAKKRLCGKFEPLSTEPGALSPLMDKGEQLAWVWRSKARCNPLFIATGHRVSTDSALAWVQRCMKGYRLPEPTRWADAVASGRPAFVRWQEIQR.

The Mg(2+) site is built by Asp35 and Asp103.

It belongs to the endonuclease V family. Requires Mg(2+) as cofactor.

The protein resides in the cytoplasm. The catalysed reaction is Endonucleolytic cleavage at apurinic or apyrimidinic sites to products with a 5'-phosphate.. DNA repair enzyme involved in the repair of deaminated bases. Selectively cleaves double-stranded DNA at the second phosphodiester bond 3' to a deoxyinosine leaving behind the intact lesion on the nicked DNA. This chain is Endonuclease V, found in Salmonella paratyphi A (strain ATCC 9150 / SARB42).